A 221-amino-acid polypeptide reads, in one-letter code: ATP-dependent dethiobiotin synthetase BioD (221 aa).

11–16 (DVGKTF) is an ATP binding site. Mg(2+) is bound at residue threonine 15. Lysine 35 is a catalytic residue. A substrate-binding site is contributed by threonine 39. Residues aspartate 44 and 103–106 (EGAG) contribute to the ATP site. The Mg(2+) site is built by aspartate 44 and glutamate 103.

Belongs to the dethiobiotin synthetase family. Homodimer. Mg(2+) serves as cofactor.

It is found in the cytoplasm. It carries out the reaction (7R,8S)-7,8-diammoniononanoate + CO2 + ATP = (4R,5S)-dethiobiotin + ADP + phosphate + 3 H(+). It participates in cofactor biosynthesis; biotin biosynthesis; biotin from 7,8-diaminononanoate: step 1/2. Catalyzes a mechanistically unusual reaction, the ATP-dependent insertion of CO2 between the N7 and N8 nitrogen atoms of 7,8-diaminopelargonic acid (DAPA, also called 7,8-diammoniononanoate) to form a ureido ring. The sequence is that of ATP-dependent dethiobiotin synthetase BioD from Leptospira interrogans serogroup Icterohaemorrhagiae serovar copenhageni (strain Fiocruz L1-130).